The following is a 617-amino-acid chain: Dihydroxy-acid dehydratase (617 aa).

Asp-81 contributes to the Mg(2+) binding site. A [2Fe-2S] cluster-binding site is contributed by Cys-122. The Mg(2+) site is built by Asp-123 and Lys-124. Lys-124 bears the N6-carboxylysine mark. Cys-195 lines the [2Fe-2S] cluster pocket. Glu-491 is a binding site for Mg(2+). The Proton acceptor role is filled by Ser-517.

It belongs to the IlvD/Edd family. As to quaternary structure, homodimer. [2Fe-2S] cluster serves as cofactor. The cofactor is Mg(2+).

The catalysed reaction is (2R)-2,3-dihydroxy-3-methylbutanoate = 3-methyl-2-oxobutanoate + H2O. It catalyses the reaction (2R,3R)-2,3-dihydroxy-3-methylpentanoate = (S)-3-methyl-2-oxopentanoate + H2O. It participates in amino-acid biosynthesis; L-isoleucine biosynthesis; L-isoleucine from 2-oxobutanoate: step 3/4. Its pathway is amino-acid biosynthesis; L-valine biosynthesis; L-valine from pyruvate: step 3/4. Functionally, functions in the biosynthesis of branched-chain amino acids. Catalyzes the dehydration of (2R,3R)-2,3-dihydroxy-3-methylpentanoate (2,3-dihydroxy-3-methylvalerate) into 2-oxo-3-methylpentanoate (2-oxo-3-methylvalerate) and of (2R)-2,3-dihydroxy-3-methylbutanoate (2,3-dihydroxyisovalerate) into 2-oxo-3-methylbutanoate (2-oxoisovalerate), the penultimate precursor to L-isoleucine and L-valine, respectively. The sequence is that of Dihydroxy-acid dehydratase from Nitrosococcus oceani (strain ATCC 19707 / BCRC 17464 / JCM 30415 / NCIMB 11848 / C-107).